A 131-amino-acid chain; its full sequence is Large ribosomal subunit protein eL32 (131 aa).

It belongs to the eukaryotic ribosomal protein eL32 family.

This chain is Large ribosomal subunit protein eL32 (RPL32), found in Eremothecium gossypii (strain ATCC 10895 / CBS 109.51 / FGSC 9923 / NRRL Y-1056) (Yeast).